Here is a 296-residue protein sequence, read N- to C-terminus: MSEKKIDLVIVTGMSGAGKTVAIQSFEDLGYFTIDNMPPALVPKFLELVESSGENDKVALVVDMRSRLFFKEVSSILDKIDLNETINFRILFLDATDSELVSRYKETRRSHPLATTGRVLDGIALERELLAPLKNLSQNVVDTTDLTPRQLRKTISDQFSVEKSQTSFRLEVVSFGFKYGLPLDADLVFDVRFLPNPYYKPELRDKTGLDKDVSDYVMQHQESEEFYQHLLALLAPILPGYQKEGKSVLTIAIGCTGGQHRSVAFAHRLAQDLGQNWTVNESHRDKNRRKETVNRS.

13–20 (GMSGAGKT) provides a ligand contact to ATP. 63-66 (DMRS) is a GTP binding site.

The protein belongs to the RapZ-like family.

Functionally, displays ATPase and GTPase activities. The chain is Nucleotide-binding protein SMU_1306c from Streptococcus mutans serotype c (strain ATCC 700610 / UA159).